The following is a 693-amino-acid chain: Elongation factor G (693 aa).

The tr-type G domain occupies 8-282; that stretch reads EKTRNIGIMA…AVIDYLPSPL (275 aa). GTP contacts are provided by residues 17-24, 81-85, and 135-138; these read AHIDAGKT, DTPGH, and NKMD.

Belongs to the TRAFAC class translation factor GTPase superfamily. Classic translation factor GTPase family. EF-G/EF-2 subfamily.

Its subcellular location is the cytoplasm. In terms of biological role, catalyzes the GTP-dependent ribosomal translocation step during translation elongation. During this step, the ribosome changes from the pre-translocational (PRE) to the post-translocational (POST) state as the newly formed A-site-bound peptidyl-tRNA and P-site-bound deacylated tRNA move to the P and E sites, respectively. Catalyzes the coordinated movement of the two tRNA molecules, the mRNA and conformational changes in the ribosome. In Staphylococcus carnosus (strain TM300), this protein is Elongation factor G.